A 795-amino-acid chain; its full sequence is Protein Jade-3 (795 aa).

Residues 1–25 are compositionally biased toward low complexity; sequence MKRLRTPSSSDSSDNESPSTSFSSN. The disordered stretch occupies residues 1–41; it reads MKRLRTPSSSDSSDNESPSTSFSSNKYGSKPGTPASAQKKP. The PHD-type 1 zinc-finger motif lies at 201–251; sequence DVICDVCRSPDSEEGNDMVFCDKCNICVHQACYGIVKVPDGNWLCRTCVLG. The C2HC pre-PHD-type zinc finger occupies 253–287; it reads TPQCLLCPKTGGAMKATRAGTKWAHVSCALWIPEV. The PHD-type 2 zinc-finger motif lies at 311–367; that stretch reads LICSLCKLKTGACIQCSVKNCTIPFHVTCAFEHSLEMKTILDEGDEVKFKSYCLKHS. Disordered regions lie at residues 630-654, 667-687, and 714-795; these read HGQS…NGIL, AASE…SGFH, and FEKN…SVQR. Composition is skewed to polar residues over residues 678 to 687 and 720 to 732; these read SGKSQSSGFH and KSSG…STER.

It belongs to the JADE family. Component of the HBO1 complex.

Scaffold subunit of some HBO1 complexes, which have a histone H4 acetyltransferase activity. This chain is Protein Jade-3 (jade3), found in Danio rerio (Zebrafish).